The sequence spans 473 residues: Photosystem II CP43 reaction center protein (473 aa).

Residues Met1–Glu14 constitute a propeptide that is removed on maturation. The residue at position 15 (Thr15) is an N-acetylthreonine. Thr15 carries the post-translational modification Phosphothreonine. Helical transmembrane passes span Leu69 to Ala93, Leu134 to Asn155, Lys178 to Thr200, Lys255 to Ser275, and Trp291 to Ala312. Glu367 contacts [CaMn4O5] cluster. Residues Arg447–Pro471 form a helical membrane-spanning segment.

This sequence belongs to the PsbB/PsbC family. PsbC subfamily. As to quaternary structure, PSII is composed of 1 copy each of membrane proteins PsbA, PsbB, PsbC, PsbD, PsbE, PsbF, PsbH, PsbI, PsbJ, PsbK, PsbL, PsbM, PsbT, PsbX, PsbY, PsbZ, Psb30/Ycf12, at least 3 peripheral proteins of the oxygen-evolving complex and a large number of cofactors. It forms dimeric complexes. Requires Binds multiple chlorophylls and provides some of the ligands for the Ca-4Mn-5O cluster of the oxygen-evolving complex. It may also provide a ligand for a Cl- that is required for oxygen evolution. PSII binds additional chlorophylls, carotenoids and specific lipids. as cofactor.

Its subcellular location is the plastid. The protein resides in the chloroplast thylakoid membrane. Its function is as follows. One of the components of the core complex of photosystem II (PSII). It binds chlorophyll and helps catalyze the primary light-induced photochemical processes of PSII. PSII is a light-driven water:plastoquinone oxidoreductase, using light energy to abstract electrons from H(2)O, generating O(2) and a proton gradient subsequently used for ATP formation. The chain is Photosystem II CP43 reaction center protein from Arabis hirsuta (Hairy rock-cress).